A 658-amino-acid chain; its full sequence is MLFSRSPFRLCRISAVGQTRQLPFSRPRFLSASVARYAIDMETVNTSERLARLRQLMQEHKVDVYIVPSEDSHQSEYIAPCDGRREFISGFSGSAGTAIVSMTKAALSTDGRYFNQASKQLDSNWLLLKRGVENVPTWQEWTTEQAEGGKVVGVDPSLITAPGARSLAETLRKNGSSLVGVQQNLVDLVWGEDRPAPPREKVRVHPDKFAGKSFQEKITDLRKELENKKTAGFVISMLDEIAWLFNLRGSDIPYNPVFFAYAIITPTTADLYIDEEKLTPEVTSHLGQDVVIKPYDSIFADATALSEARKQDAGEAAAKFLLSNKASWALSLSLGGEEHVEETRSPIADAKAVKNEAELAGMRACHIRDGAALIEYFAWLENELVSKKTSLDEVDAADKLEQIRSKHDLFAGLSFDTISSTGPNGAVIHYKPEKGSCAIIDPEAIYLCDSGAQYLDGTTDVTRTFHFGQPTELEKKAFTLVLKGMIAIDSAVFPKGTSGFALDVLARQFLWKEGLDYLHGTGHGIGSYLNVHEGPIGIGTRVQYTEVPIAPGNVISDEPGFYEDGKFGIRIEICLADVIMAREVQTTHKFGDKPWLGFEHVTMAPIGRNLIEPSLLSESELKWVNDYHAEIWEKTHHFFENDEFTRSWLQRETQPISK.

Asp-449, Asp-460, Glu-558, and Glu-572 together coordinate Mn(2+).

Belongs to the peptidase M24B family. Mn(2+) is required as a cofactor.

The catalysed reaction is Release of any N-terminal amino acid, including proline, that is linked to proline, even from a dipeptide or tripeptide.. Its function is as follows. Catalyzes the removal of a penultimate prolyl residue from the N-termini of peptides. In Aspergillus clavatus (strain ATCC 1007 / CBS 513.65 / DSM 816 / NCTC 3887 / NRRL 1 / QM 1276 / 107), this protein is Probable Xaa-Pro aminopeptidase P (ampp).